The chain runs to 312 residues: uncharacterized protein (312 aa).

The region spanning 8-65 (PGLTCFEIFLAIAEAGSLGGAARELGLTQQAVSRRLASMEAQIGVRLAIRTTRGSQLT) is the HTH lysR-type domain. Positions 25 to 45 (LGGAARELGLTQQAVSRRLAS) form a DNA-binding region, H-T-H motif.

This sequence belongs to the LysR transcriptional regulatory family.

This is an uncharacterized protein from Mycobacterium tuberculosis (strain CDC 1551 / Oshkosh).